A 60-amino-acid chain; its full sequence is Large ribosomal subunit protein uL30 (60 aa).

Belongs to the universal ribosomal protein uL30 family. As to quaternary structure, part of the 50S ribosomal subunit.

The chain is Large ribosomal subunit protein uL30 from Polaromonas sp. (strain JS666 / ATCC BAA-500).